Consider the following 453-residue polypeptide: tRNA (guanine-N(7)-)-methyltransferase non-catalytic subunit TRM82 (453 aa).

The tract at residues 69–99 (ENEEKGIKKSKTNEGNTIEKKHDAKIPVPGP) is disordered. WD repeat units lie at residues 103-143 (PIYS…NDNC) and 244-286 (GHKE…DEFD).

Belongs to the WD repeat TRM82 family. In terms of assembly, forms a heterodimer with the catalytic subunit TRM8.

The protein resides in the nucleus. It functions in the pathway tRNA modification; N(7)-methylguanine-tRNA biosynthesis. Its function is as follows. Required for the formation of N(7)-methylguanine at position 46 (m7G46) in tRNA. In the complex, it is required to stabilize and induce conformational changes of the catalytic subunit. The protein is tRNA (guanine-N(7)-)-methyltransferase non-catalytic subunit TRM82 of Vanderwaltozyma polyspora (strain ATCC 22028 / DSM 70294 / BCRC 21397 / CBS 2163 / NBRC 10782 / NRRL Y-8283 / UCD 57-17) (Kluyveromyces polysporus).